A 30-amino-acid chain; its full sequence is Photosystem I reaction center subunit XII (30 aa).

The helical transmembrane segment at 7–27 (VFIGLVIALVPAILAFKLGLS) threads the bilayer.

It belongs to the PsaM family.

The protein localises to the plastid. The protein resides in the chloroplast thylakoid membrane. This Cyanidium caldarium (Red alga) protein is Photosystem I reaction center subunit XII.